We begin with the raw amino-acid sequence, 197 residues long: Holliday junction branch migration complex subunit RuvA (197 aa).

The interval 1–64 is domain I; it reads MIASIRGILI…EDSLTLYGFE (64 aa). A domain II region spans residues 65 to 145; that stretch reads TVEQRQLFET…GLPTGAAVTP (81 aa). The segment at 146-148 is flexible linker; sequence AVA. Residues 148-197 are domain III; it reads AAANAELSEALISLGFTDAEAAAAIAALPSDAPPDLEERVRLALRYFSAS.

This sequence belongs to the RuvA family. As to quaternary structure, homotetramer. Forms an RuvA(8)-RuvB(12)-Holliday junction (HJ) complex. HJ DNA is sandwiched between 2 RuvA tetramers; dsDNA enters through RuvA and exits via RuvB. An RuvB hexamer assembles on each DNA strand where it exits the tetramer. Each RuvB hexamer is contacted by two RuvA subunits (via domain III) on 2 adjacent RuvB subunits; this complex drives branch migration. In the full resolvosome a probable DNA-RuvA(4)-RuvB(12)-RuvC(2) complex forms which resolves the HJ.

The protein localises to the cytoplasm. Functionally, the RuvA-RuvB-RuvC complex processes Holliday junction (HJ) DNA during genetic recombination and DNA repair, while the RuvA-RuvB complex plays an important role in the rescue of blocked DNA replication forks via replication fork reversal (RFR). RuvA specifically binds to HJ cruciform DNA, conferring on it an open structure. The RuvB hexamer acts as an ATP-dependent pump, pulling dsDNA into and through the RuvAB complex. HJ branch migration allows RuvC to scan DNA until it finds its consensus sequence, where it cleaves and resolves the cruciform DNA. This chain is Holliday junction branch migration complex subunit RuvA, found in Roseiflexus sp. (strain RS-1).